The sequence spans 374 residues: Translocating chain-associated membrane protein 1 (374 aa).

At M1–C29 the chain is on the cytoplasmic side. The helical transmembrane segment at V30–F50 threads the bilayer. Over V51 to G76 the chain is Lumenal. The N-linked (GlcNAc...) asparagine glycan is linked to N56. A helical membrane pass occupies residues I77–I97. The Cytoplasmic segment spans residues Q98–E121. Residues S117–H326 enclose the TLC domain. A helical membrane pass occupies residues S122–S142. The Lumenal segment spans residues E143 to N159. Residues L160–F180 form a helical membrane-spanning segment. The Cytoplasmic segment spans residues P181–D192. Residues I193–L213 traverse the membrane as a helical segment. Residue N214 is a topological domain, lumenal. A helical membrane pass occupies residues L215 to I235. At S236 to S251 the chain is on the cytoplasmic side. The helical transmembrane segment at L252–V272 threads the bilayer. At G273–R297 the chain is on the lumenal side. A helical membrane pass occupies residues I298–F318. Residues Q319–S374 lie on the Cytoplasmic side of the membrane. Over residues V334 to K347 the composition is skewed to basic residues. The interval V334–S374 is disordered. Residues N352–A363 are compositionally biased toward polar residues. Residue S365 is modified to Phosphoserine.

Belongs to the TRAM family. In terms of assembly, interacts with SEC61B. May interact with Derlin-1/DERL1. In terms of processing, N-glycosylated.

It localises to the endoplasmic reticulum membrane. Its function is as follows. Involved in the translocation of nascent protein chains into or through the endoplasmic reticulum (ER) membrane by facilitating the proper chain positioning at the SEC61 channel. Regulates the exposure of nascent secretory protein chain to the cytosol during translocation into the ER. May affect the phospholipid bilayer in the vicinity of the lateral gate of the SEC61 channel, thereby facilitating ER protein transport. Intimately associates with transmembrane (TM) domain of nascent membrane proteins during the entire integration process into the ER membrane. Associates with the second TM domain of G-protein-coupled receptor opsin/OPSD nascent chain in the ER membrane, which may facilitate its integration into the membrane. Under conditions of ER stress, participates in the disposal of misfolded ER membrane proteins during the unfolded protein response (UPR), an integrated stress response (ISR) pathway, by selectively retrotranslocating misfolded ER-membrane proteins from the ER into the cytosol where they are ubiquitinated and degraded by the proteasome. The polypeptide is Translocating chain-associated membrane protein 1 (TRAM1) (Pongo abelii (Sumatran orangutan)).